The sequence spans 155 residues: Ribosomal RNA large subunit methyltransferase H (155 aa).

Residues Gly-104 and 123 to 128 each bind S-adenosyl-L-methionine; that span reads LSAMTF.

It belongs to the RNA methyltransferase RlmH family. In terms of assembly, homodimer.

Its subcellular location is the cytoplasm. It catalyses the reaction pseudouridine(1915) in 23S rRNA + S-adenosyl-L-methionine = N(3)-methylpseudouridine(1915) in 23S rRNA + S-adenosyl-L-homocysteine + H(+). In terms of biological role, specifically methylates the pseudouridine at position 1915 (m3Psi1915) in 23S rRNA. This chain is Ribosomal RNA large subunit methyltransferase H, found in Oleidesulfovibrio alaskensis (strain ATCC BAA-1058 / DSM 17464 / G20) (Desulfovibrio alaskensis).